The primary structure comprises 643 residues: Phosphatidylinositol-3,5-bisphosphate 3-phosphatase MTMR2 (643 aa).

Composition is skewed to polar residues over residues 1–12 (MEKSSSCESLGS) and 23–40 (DSLSSASTSHSENSVHTK). A disordered region spans residues 1 to 54 (MEKSSSCESLGSQPAVARPPSVDSLSSASTSHSENSVHTKSASVVSSDSISTSA). 2 positions are modified to phosphoserine: S6 and S9. Residues 41–54 (SASVVSSDSISTSA) show a composition bias toward low complexity. S58 is modified (phosphoserine). One can recognise a GRAM domain in the interval 68–139 (NKLAEMEEPP…GVISRVEKIG (72 aa)). A Myotubularin phosphatase domain is found at 205–580 (GWKLYDSLSE…RHLELWVGYY (376 aa)). A 1,2-diacyl-sn-glycero-3-phospho-(1D-myo-inositol-3,5-bisphosphate)-binding residues include N330, N355, and I356. A 1,2-diacyl-sn-glycero-3-phospho-(1D-myo-inositol-3-phosphate)-binding residues include N330, N355, and I356. The Phosphocysteine intermediate role is filled by C417. Positions 418, 419, 420, 421, 422, 423, 459, and 463 each coordinate a 1,2-diacyl-sn-glycero-3-phospho-(1D-myo-inositol-3,5-bisphosphate). The a 1,2-diacyl-sn-glycero-3-phospho-(1D-myo-inositol-3-phosphate) site is built by S418, D419, G420, W421, D422, and R423. R463 is an a 1,2-diacyl-sn-glycero-3-phospho-(1D-myo-inositol-3-phosphate) binding site. Positions 593–627 (IHNRYKELLAKRAELQKKVEELQREISNRSTSSSE) form a coiled coil. Residues 614 to 643 (LQREISNRSTSSSERAGSPAQCVTPVQTVV) form a disordered region.

Belongs to the protein-tyrosine phosphatase family. Non-receptor class myotubularin subfamily. Homodimer (via coiled-coil domain). Heterotetramer consisting of one MTMR2 dimer and one SBF2/MTMR13 dimer; specifically in peripheral nerves stabilizes SBF2/MTMR13 at the membranes and increases MTMR2 catalytic activity towards phosphatidylinositol 3,5-bisphosphate and to a lesser extent towards phosphatidylinositol 3-phosphate. Heterodimer with SBF1/MTMR5; acts as an adapter for the phosphatase MTMR2 to regulate MTMR2 catalytic activity and subcellular location. Heterodimer with MTMR12. Phosphorylation at Ser-58 decreases MTMR2 localization to endocytic vesicular structures.

The protein resides in the cytoplasm. The protein localises to the early endosome membrane. Its subcellular location is the perinuclear region. It localises to the cell projection. It is found in the axon. The protein resides in the endosome membrane. The enzyme catalyses a 1,2-diacyl-sn-glycero-3-phospho-(1D-myo-inositol-3,5-bisphosphate) + H2O = a 1,2-diacyl-sn-glycero-3-phospho-(1D-myo-inositol-5-phosphate) + phosphate. The catalysed reaction is a 1,2-diacyl-sn-glycero-3-phospho-(1D-myo-inositol-3-phosphate) + H2O = a 1,2-diacyl-sn-glycero-3-phospho-(1D-myo-inositol) + phosphate. It carries out the reaction 1,2-dioctanoyl-sn-glycero-3-phospho-(1-D-myo-inositol-3-phosphate) + H2O = 1,2-dioctanoyl-sn-glycero-3-phospho-(1D-myo-inositol) + phosphate. It catalyses the reaction 1,2-dioctanoyl-sn-glycero-3-phospho-(1D-myo-inositol-3,5-bisphosphate) + H2O = 1,2-dioctanoyl-sn-glycero-3-phospho-(1D-myo-inositol-5-phosphate) + phosphate. Functionally, lipid phosphatase that specifically dephosphorylates the D-3 position of phosphatidylinositol 3-phosphate and phosphatidylinositol 3,5-bisphosphate, generating phosphatidylinositol and phosphatidylinositol 5-phosphate. Regulates the level of these phosphoinositides critical for various biological processes including autophagy initiation and autophagosome maturation. In Bos taurus (Bovine), this protein is Phosphatidylinositol-3,5-bisphosphate 3-phosphatase MTMR2.